A 402-amino-acid polypeptide reads, in one-letter code: Dihydrolipoyllysine-residue acetyltransferase component of pyruvate dehydrogenase complex (402 aa).

The 76-residue stretch at 2–77 (ANEFKFTDVG…HIGQVMAVID (76 aa)) folds into the Lipoyl-binding domain. K43 carries the post-translational modification N6-lipoyllysine. 2 disordered regions span residues 82 to 110 (AAAP…APVT) and 143 to 172 (PQPT…PSGE). Pro residues-rich tracts occupy residues 87-107 (APQP…PTPA) and 143-162 (PQPT…PTPA). Residue H374 is part of the active site.

The protein belongs to the 2-oxoacid dehydrogenase family. In terms of assembly, forms a 24-polypeptide structural core with octahedral symmetry. Requires (R)-lipoate as cofactor.

The catalysed reaction is N(6)-[(R)-dihydrolipoyl]-L-lysyl-[protein] + acetyl-CoA = N(6)-[(R)-S(8)-acetyldihydrolipoyl]-L-lysyl-[protein] + CoA. In terms of biological role, the pyruvate dehydrogenase complex catalyzes the overall conversion of pyruvate to acetyl-CoA and CO(2). It contains multiple copies of three enzymatic components: pyruvate dehydrogenase (E1), dihydrolipoamide acetyltransferase (E2) and lipoamide dehydrogenase (E3). The chain is Dihydrolipoyllysine-residue acetyltransferase component of pyruvate dehydrogenase complex (pdhC) from Mycoplasma pneumoniae (strain ATCC 29342 / M129 / Subtype 1) (Mycoplasmoides pneumoniae).